Consider the following 200-residue polypeptide: Large ribosomal subunit protein uL4 (200 aa).

A disordered region spans residues 42 to 65 (TRAQKTRSEVSGGGAKPWRQKGTG).

It belongs to the universal ribosomal protein uL4 family. As to quaternary structure, part of the 50S ribosomal subunit.

Its function is as follows. One of the primary rRNA binding proteins, this protein initially binds near the 5'-end of the 23S rRNA. It is important during the early stages of 50S assembly. It makes multiple contacts with different domains of the 23S rRNA in the assembled 50S subunit and ribosome. Functionally, forms part of the polypeptide exit tunnel. The chain is Large ribosomal subunit protein uL4 from Vibrio vulnificus (strain CMCP6).